The following is a 79-amino-acid chain: Short neurotoxin 2 (79 aa).

The first 21 residues, Met1–Thr21, serve as a signal peptide directing secretion. Cystine bridges form between Cys24–Cys41, Cys34–Cys59, Cys63–Cys71, and Cys72–Cys77.

The protein belongs to the three-finger toxin family. Short-chain subfamily. Type III alpha-neurotoxin sub-subfamily. As to expression, expressed by the venom gland.

The protein resides in the secreted. Functionally, binds with high affinity to muscle nicotinic acetylcholine receptor (nAChR) and hinders acetylcholine binding to the receptor, thereby impairing neuromuscular transmission. Competes with the binding of alpha-bungarotoxin on muscle AChR (from Torpedo) with an IC(50) of 0.30 uM. Causes muscle paralysis, spasms and increased respiration. The polypeptide is Short neurotoxin 2 (Pseudonaja textilis (Eastern brown snake)).